Here is a 559-residue protein sequence, read N- to C-terminus: MSFLCVRTVSRFRSLSRALAPGFLLLHGNAVPKTAVFFRQQSSNTRLFSSYTAPSGVEENNSKSALKNKLPPGKEVSSKDAKEKITTSAIDLALNSVVKVFTVSSKPRLFQPWQITMQSESTGSGFVISGKKILTNAHVVANQTSVKVRKHGSTTKYKAKVQAVGHECDLAILEIDNDKFWEGMNPLELGDIPSMQDTVYVVGYPKGGDTISVSKGVVSRVGPIKYSHSGTELLAIQIDAAINNGNSGGPVIMGNKVAGVAFESLCYSDSIGYIIPTPVIRHFLNAIEESGEDVSFGSINLTYQKMDNDQLRKDFKMSDKMTGILINKINPLSDVHKVLKKDDIILAIDGVPIGNDSSVHFRKKERITFKHLVSMKKPCETALLKVLREGKEYEFNSSLKSVPPLVPKRQYDKSASYYIFGGLVFLPLTKPYIDSSCVSESALGKMPKKAGEQVVIISQILEDDINTGYSIFEDFQVKKVNGVQVHNLKHLYKLVEECCTETVRMDLEKDKVITLDYKSAKKVTSKILKSLKIPSAVSEDLQPKQQNKRSKVPPKSKEH.

The transit peptide at 1-48 directs the protein to the mitochondrion; the sequence is MSFLCVRTVSRFRSLSRALAPGFLLLHGNAVPKTAVFFRQQSSNTRLF. Residues 59 to 81 form a disordered region; the sequence is ENNSKSALKNKLPPGKEVSSKDA. Residues 100-292 form a serine protease region; it reads VFTVSSKPRL…FLNAIEESGE (193 aa). Catalysis depends on charge relay system residues His138, Asp169, and Ser247. The region spanning 300–380 is the PDZ domain; the sequence is NLTYQKMDND…HLVSMKKPCE (81 aa). Residues 538-559 are disordered; sequence SEDLQPKQQNKRSKVPPKSKEH. Over residues 546–559 the composition is skewed to basic residues; that stretch reads QNKRSKVPPKSKEH.

It belongs to the peptidase S1C family.

It is found in the mitochondrion matrix. In terms of biological role, putative serine protease. The protein is Putative protease Do-like 3, mitochondrial (DEGP3) of Arabidopsis thaliana (Mouse-ear cress).